The primary structure comprises 92 residues: Small ribosomal subunit protein uS19 (92 aa).

Belongs to the universal ribosomal protein uS19 family.

Protein S19 forms a complex with S13 that binds strongly to the 16S ribosomal RNA. The protein is Small ribosomal subunit protein uS19 of Wigglesworthia glossinidia brevipalpis.